The sequence spans 951 residues: Leucine-rich repeat-containing G-protein coupled receptor 4 (951 aa).

Positions 1–24 (MPGPLRLLCFFALGLLGSAGPSGA) are cleaved as a signal peptide. Positions 25–57 (APPLCAAPCSCDGDRRVDCSGKGLTAVPEGLSA) constitute an LRRNT domain. The Extracellular portion of the chain corresponds to 25 to 544 (APPLCAAPCS…LLGSWMIRLT (520 aa)). 2 disulfides stabilise this stretch: Cys29/Cys35 and Cys33/Cys43. LRR repeat units lie at residues 58–79 (FTQALDISMNNITQLPEDAFKS), 82–103 (FLEELQLAGNDLSFIHPKALSG), 106–127 (ELKVLTLQNNQLRTVPSEAIHG), 130–151 (ALQSLRLDANHITSVPEDSFEG), 154–177 (QLRHLWLDDNSLTEVPVRPLSNLP), 178–199 (TLQALTLALNNISSIPDFAFTN), 202–223 (SLVVLHLHNNKIKSLSQHCFDG), 226–247 (NLETLDLNYNNLDEFPQAIKAL), 249–270 (SLKELGFHSNSISVIPDGAFGG), and 273–294 (LLRTIHLYDNPLSFVGNSAFHN). N-linked (GlcNAc...) asparagine glycosylation occurs at Asn68. N-linked (GlcNAc...) asparagine glycosylation is found at Asn188 and Asn199. N-linked (GlcNAc...) asparagine glycosylation is found at Asn294 and Asn314. 5 LRR repeats span residues 320 to 341 (HLESLTLTGTKISSIPDDLCQN), 344 to 365 (MLRTLDLSYNNIRDLPSFNGCR), 366 to 387 (ALEEISLQRNQISLIKENTFQG), 390 to 411 (SLRILDLSRNLIREIHSGAFAK), and 414 to 435 (TITNLDVSFNELTSFPTEGLNG). Cys339 and Cys364 are joined by a disulfide. 2 cysteine pairs are disulfide-bonded: Cys470–Cys522 and Cys471–Cys476. Asn505 is a glycosylation site (N-linked (GlcNAc...) asparagine). Residues 545-565 (VWFIFLVALLFNLLVILTVFA) traverse the membrane as a helical segment. Residues 566–575 (SCSSLPASKL) lie on the Cytoplasmic side of the membrane. The helical transmembrane segment at 576–596 (FIGLISVSNLLMGIYTGILTF) threads the bilayer. Topologically, residues 597–619 (LDAVSWGRFAEFGIWWETGSGCK) are extracellular. The cysteines at positions 618 and 693 are disulfide-linked. The helical transmembrane segment at 620–640 (VAGSLAVFSSESAVFLLTLAA) threads the bilayer. At 641-661 (VERSVFAKDLMKHGKSSHLRQ) the chain is on the cytoplasmic side. The helical transmembrane segment at 662–682 (FQVAALLALLGAAVAGCFPLF) threads the bilayer. Residues 683–703 (HGGQYSASPLCLPFPTGETPS) lie on the Extracellular side of the membrane. A helical membrane pass occupies residues 704–724 (LGFTVTLVLLNSLAFLLMAII). Residues 725–756 (YTKLYCNLEKEDLSENSQSSVIKHVAWLIFTN) lie on the Cytoplasmic side of the membrane. Residues 757–777 (CIFFCPVAFFSFAPLITAISI) traverse the membrane as a helical segment. The Extracellular portion of the chain corresponds to 778–783 (SPEIMK). Residues 784–804 (SVTLIFFPLPACLNPVLYVFF) traverse the membrane as a helical segment. The Cytoplasmic portion of the chain corresponds to 805–951 (NPKFKEDWKL…YAYNLQRVRD (147 aa)). Ser920 carries the phosphoserine modification.

Belongs to the G-protein coupled receptor 1 family.

The protein localises to the cell membrane. Functionally, receptor for R-spondins that potentiates the canonical Wnt signaling pathway and is involved in the formation of various organs. Upon binding to R-spondins (RSPO1, RSPO2, RSPO3 or RSPO4), associates with phosphorylated LRP6 and frizzled receptors that are activated by extracellular Wnt receptors, triggering the canonical Wnt signaling pathway to increase expression of target genes. In contrast to classical G-protein coupled receptors, does not activate heterotrimeric G-proteins to transduce the signal. Its function as activator of the Wnt signaling pathway is required for the development of various organs, including liver, kidney, intestine, bone, reproductive tract and eye. May also act as a receptor for norrin (NDP), such results however require additional confirmation in vivo. Required during spermatogenesis to activate the Wnt signaling pathway in peritubular myoid cells. Required for the maintenance of intestinal stem cells and Paneth cell differentiation in postnatal intestinal crypts. Acts as a regulator of bone formation and remodeling. Involved in kidney development; required for maintaining the ureteric bud in an undifferentiated state. Involved in the development of the anterior segment of the eye. Required during erythropoiesis. Also acts as a negative regulator of innate immunity by inhibiting TLR2/TLR4 associated pattern-recognition and pro-inflammatory cytokine production. Plays an important role in regulating the circadian rhythms of plasma lipids, partially through regulating the rhythmic expression of MTTP. Required for proper development of GnRH neurons (gonadotropin-releasing hormone expressing neurons) that control the release of reproductive hormones from the pituitary gland. This Rattus norvegicus (Rat) protein is Leucine-rich repeat-containing G-protein coupled receptor 4 (Lgr4).